A 142-amino-acid polypeptide reads, in one-letter code: Small heat shock protein IbpB (142 aa).

In terms of domain architecture, sHSP spans 26–137; it reads AGESQSFPPY…APQRIAISER (112 aa).

This sequence belongs to the small heat shock protein (HSP20) family. As to quaternary structure, homodimer. Forms homomultimers of about 100-150 subunits at optimal growth temperatures. Conformation changes to oligomers at high temperatures or high ionic concentrations. The decrease in size of the multimers is accompanied by an increase in chaperone activity.

Its subcellular location is the cytoplasm. In terms of biological role, associates with aggregated proteins, together with IbpA, to stabilize and protect them from irreversible denaturation and extensive proteolysis during heat shock and oxidative stress. Aggregated proteins bound to the IbpAB complex are more efficiently refolded and reactivated by the ATP-dependent chaperone systems ClpB and DnaK/DnaJ/GrpE. Its activity is ATP-independent. The sequence is that of Small heat shock protein IbpB from Klebsiella pneumoniae (strain 342).